Reading from the N-terminus, the 464-residue chain is ATP synthase subunit beta (464 aa).

Residue G152–T159 coordinates ATP.

It belongs to the ATPase alpha/beta chains family. In terms of assembly, F-type ATPases have 2 components, CF(1) - the catalytic core - and CF(0) - the membrane proton channel. CF(1) has five subunits: alpha(3), beta(3), gamma(1), delta(1), epsilon(1). CF(0) has three main subunits: a(1), b(2) and c(9-12). The alpha and beta chains form an alternating ring which encloses part of the gamma chain. CF(1) is attached to CF(0) by a central stalk formed by the gamma and epsilon chains, while a peripheral stalk is formed by the delta and b chains.

It is found in the cell membrane. It carries out the reaction ATP + H2O + 4 H(+)(in) = ADP + phosphate + 5 H(+)(out). Functionally, produces ATP from ADP in the presence of a proton gradient across the membrane. The catalytic sites are hosted primarily by the beta subunits. This is ATP synthase subunit beta from Clostridioides difficile (strain 630) (Peptoclostridium difficile).